Reading from the N-terminus, the 853-residue chain is Putative dipeptidyl aminopeptidase C14C4.15c (853 aa).

The segment at 1–26 is disordered; that stretch reads MNAYEGDTLNNHGKSSTRQHWRKRSA. At 1-65 the chain is on the cytoplasmic side; it reads MNAYEGDTLN…AKKRRRKKHR (65 aa). The span at 15–25 shows a compositional bias: basic residues; the sequence is SSTRQHWRKRS. Residues 66–86 form a helical; Signal-anchor for type II membrane protein membrane-spanning segment; sequence YIYLAVCLFFLASVLSCAIIF. The Lumenal portion of the chain corresponds to 87 to 853; it reads RFYLHTNREN…SGHFHHALYC (767 aa). Asparagine 96, asparagine 102, asparagine 472, asparagine 483, and asparagine 613 each carry an N-linked (GlcNAc...) asparagine glycan. Active-site charge relay system residues include serine 719, aspartate 795, and histidine 828.

Belongs to the peptidase S9B family.

The protein localises to the vacuole membrane. This chain is Putative dipeptidyl aminopeptidase C14C4.15c, found in Schizosaccharomyces pombe (strain 972 / ATCC 24843) (Fission yeast).